The following is an 891-amino-acid chain: 26S proteasome non-ATPase regulatory subunit 2 homolog B (891 aa).

A disordered region spans residues 1–43 (MAPVPDPNSVGGGAKRDEATTKIPSKDSKKKDDKKEEDLSEED). Over residues 14–37 (AKRDEATTKIPSKDSKKKDDKKEE) the composition is skewed to basic and acidic residues. 7 PC repeats span residues 414 to 447 (SAVASLGMIQLWDVETGLGHLDKYFHSNDNPVVA), 448 to 484 (GALLGVGIVNCGIKNDCDPAFALLSGYIDNEDSSVRI), 485 to 519 (GAIMGLGIAYAGSQNDQIKIRLSPILNDANAPLDV), 522 to 556 (FAALSLGMIYVGSCNEEVAQSIIFALMDRSEAELG), 565 to 594 (LGLGLLYLGKQESVEATAEVSKTFNEKIRK), 674 to 705 (LALGLLCISNPKVTVMDTLSRLSHDTDSEVAM), and 724 to 739 (AGMLRNLSSYYYKDAS).

The protein belongs to the proteasome subunit S2 family. In terms of assembly, component of the 19S regulatory particle (RP/PA700) base subcomplex of the 26S proteasome. The 26S proteasome is composed of a core protease (CP), known as the 20S proteasome, capped at one or both ends by the 19S regulatory particle (RP/PA700). The RP/PA700 complex is composed of at least 17 different subunits in two subcomplexes, the base and the lid, which form the portions proximal and distal to the 20S proteolytic core, respectively. In terms of processing, ubiquitinated. As to expression, expressed in stems, leaves, buds, flowers, siliques and developing seeds.

Acts as a regulatory subunit of the 26 proteasome which is involved in the ATP-dependent degradation of ubiquitinated proteins. The sequence is that of 26S proteasome non-ATPase regulatory subunit 2 homolog B (RPN1B) from Arabidopsis thaliana (Mouse-ear cress).